The following is an 81-amino-acid chain: Antitoxin VapB28 (81 aa).

Antitoxin component of a type II toxin-antitoxin (TA) system. The polypeptide is Antitoxin VapB28 (vapB28) (Mycobacterium tuberculosis (strain CDC 1551 / Oshkosh)).